Here is a 142-residue protein sequence, read N- to C-terminus: ATP synthase subunit b' (142 aa).

Residues 7-27 traverse the membrane as a helical segment; that stretch reads TLPLMMFQFFLLVAVLNAVFF.

It belongs to the ATPase B chain family. F-type ATPases have 2 components, F(1) - the catalytic core - and F(0) - the membrane proton channel. F(1) has five subunits: alpha(3), beta(3), gamma(1), delta(1), epsilon(1). F(0) has four main subunits: a(1), b(1), b'(1) and c(10-14). The alpha and beta chains form an alternating ring which encloses part of the gamma chain. F(1) is attached to F(0) by a central stalk formed by the gamma and epsilon chains, while a peripheral stalk is formed by the delta, b and b' chains.

It localises to the cellular thylakoid membrane. F(1)F(0) ATP synthase produces ATP from ADP in the presence of a proton or sodium gradient. F-type ATPases consist of two structural domains, F(1) containing the extramembraneous catalytic core and F(0) containing the membrane proton channel, linked together by a central stalk and a peripheral stalk. During catalysis, ATP synthesis in the catalytic domain of F(1) is coupled via a rotary mechanism of the central stalk subunits to proton translocation. Its function is as follows. Component of the F(0) channel, it forms part of the peripheral stalk, linking F(1) to F(0). The b'-subunit is a diverged and duplicated form of b found in plants and photosynthetic bacteria. The polypeptide is ATP synthase subunit b' (Acaryochloris marina (strain MBIC 11017)).